The chain runs to 171 residues: Vimentin-type intermediate filament-associated coiled-coil protein (171 aa).

A coiled-coil region spans residues 7–98; that stretch reads LQIREANAHL…QRDQMIQELQ (92 aa). The tract at residues 126–171 is disordered; it reads ELGPLPSSHSHGAQLLPDGPGPPLGNSMREEEGQDDQQPAVFGTTV.

As to expression, expressed in brain, heart, kidney, liver, lung, skeletal muscle, spleen and testis. Within the kidney expression is pronounced within glomeruli.

Its subcellular location is the cytoplasm. This Rattus norvegicus (Rat) protein is Vimentin-type intermediate filament-associated coiled-coil protein (Vmac).